The primary structure comprises 155 residues: Small ribosomal subunit protein uS7 (155 aa).

This sequence belongs to the universal ribosomal protein uS7 family. As to quaternary structure, part of the 30S ribosomal subunit. Contacts proteins S9 and S11.

Functionally, one of the primary rRNA binding proteins, it binds directly to 16S rRNA where it nucleates assembly of the head domain of the 30S subunit. Is located at the subunit interface close to the decoding center, probably blocks exit of the E-site tRNA. The chain is Small ribosomal subunit protein uS7 from Chlorobium chlorochromatii (strain CaD3).